Consider the following 339-residue polypeptide: Adenylosuccinate synthetase (339 aa).

GTP-binding positions include 12–18 and 42–44; these read GDEGKGS and GHS. Asp-13 functions as the Proton acceptor in the catalytic mechanism. Mg(2+) contacts are provided by Asp-13 and Gly-42. IMP-binding positions include 13–16, 40–43, Thr-127, Arg-141, Gln-179, Thr-194, and Arg-256; these read DEGK and NAGH. Catalysis depends on His-43, which acts as the Proton donor. 252-258 provides a ligand contact to substrate; sequence TVTGRRR. GTP-binding positions include Arg-258, 284–286, and 324–326; these read MLD and KTG.

This sequence belongs to the adenylosuccinate synthetase family. Homodimer. Mg(2+) is required as a cofactor.

It is found in the cytoplasm. The enzyme catalyses IMP + L-aspartate + GTP = N(6)-(1,2-dicarboxyethyl)-AMP + GDP + phosphate + 2 H(+). It functions in the pathway purine metabolism; AMP biosynthesis via de novo pathway; AMP from IMP: step 1/2. Functionally, plays an important role in the de novo pathway of purine nucleotide biosynthesis. Catalyzes the first committed step in the biosynthesis of AMP from IMP. This Pyrococcus sp. (strain ST700) protein is Adenylosuccinate synthetase.